The chain runs to 1026 residues: Exportin-T (1026 aa).

This sequence belongs to the exportin family.

The protein resides in the nucleus. It localises to the cytoplasm. Its function is as follows. tRNA nucleus export receptor which facilitates tRNA translocation across the nuclear pore complex. Involved in pre-tRNA splicing, probably by affecting the interaction of pre-tRNA with splicing endonuclease. This Neurospora crassa (strain ATCC 24698 / 74-OR23-1A / CBS 708.71 / DSM 1257 / FGSC 987) protein is Exportin-T (los1).